The following is a 324-amino-acid chain: Beta-ketoacyl-[acyl-carrier-protein] synthase III (324 aa).

Active-site residues include Cys112 and His249. Residues 250–254 (QANRR) form an ACP-binding region. Asn279 is a catalytic residue.

Belongs to the thiolase-like superfamily. FabH family. As to quaternary structure, homodimer.

The protein localises to the cytoplasm. The enzyme catalyses malonyl-[ACP] + acetyl-CoA + H(+) = 3-oxobutanoyl-[ACP] + CO2 + CoA. It functions in the pathway lipid metabolism; fatty acid biosynthesis. In terms of biological role, catalyzes the condensation reaction of fatty acid synthesis by the addition to an acyl acceptor of two carbons from malonyl-ACP. Catalyzes the first condensation reaction which initiates fatty acid synthesis and may therefore play a role in governing the total rate of fatty acid production. Possesses both acetoacetyl-ACP synthase and acetyl transacylase activities. Its substrate specificity determines the biosynthesis of branched-chain and/or straight-chain of fatty acids. The sequence is that of Beta-ketoacyl-[acyl-carrier-protein] synthase III from Streptococcus pyogenes serotype M4 (strain MGAS10750).